Consider the following 149-residue polypeptide: Transcriptional repressor NrdR (149 aa).

The segment at 3–34 (CPFCSTEETKVIDSRLVSEGYQVRRRRECGNC) is a zinc-finger region. Residues 49 to 139 (PKVIKNDGTR…VYLSFDDINQ (91 aa)) form the ATP-cone domain.

This sequence belongs to the NrdR family. Zn(2+) is required as a cofactor.

Functionally, negatively regulates transcription of bacterial ribonucleotide reductase nrd genes and operons by binding to NrdR-boxes. The sequence is that of Transcriptional repressor NrdR from Pasteurella multocida (strain Pm70).